Consider the following 88-residue polypeptide: Small ribosomal subunit protein bS18B (88 aa).

Belongs to the bacterial ribosomal protein bS18 family. In terms of assembly, part of the 30S ribosomal subunit. Forms a tight heterodimer with protein bS6.

Functionally, binds as a heterodimer with protein bS6 to the central domain of the 16S rRNA, where it helps stabilize the platform of the 30S subunit. The sequence is that of Small ribosomal subunit protein bS18B from Roseiflexus castenholzii (strain DSM 13941 / HLO8).